A 101-amino-acid polypeptide reads, in one-letter code: Small ribosomal subunit protein uS10 (101 aa).

The protein belongs to the universal ribosomal protein uS10 family. Part of the 30S ribosomal subunit.

In terms of biological role, involved in the binding of tRNA to the ribosomes. The polypeptide is Small ribosomal subunit protein uS10 (Mycobacteroides abscessus (strain ATCC 19977 / DSM 44196 / CCUG 20993 / CIP 104536 / JCM 13569 / NCTC 13031 / TMC 1543 / L948) (Mycobacterium abscessus)).